We begin with the raw amino-acid sequence, 209 residues long: MTRVVLASASKGRLGVLRQAGIDPQVIVSAVDEDTLLAALDPDLPPEAVVAKLATAKALSVAAELPDELLADCVVIGCDSMLFLDGTLRGKPGSAEAARAQWESMAGSAGHLLTGHALLRISGGVITHTEGDTGSTKVHFGKPAEDEITRYVDSGEPIHVAGAFTLNGLGGWFVDRIEGDPSNVIGLSLPLVHRLVRRTGLSISDLWQR.

Residue Asp-79 is the Proton acceptor of the active site.

The protein belongs to the Maf family. It depends on a divalent metal cation as a cofactor.

It is found in the cytoplasm. It carries out the reaction a ribonucleoside 5'-triphosphate + H2O = a ribonucleoside 5'-phosphate + diphosphate + H(+). The catalysed reaction is a 2'-deoxyribonucleoside 5'-triphosphate + H2O = a 2'-deoxyribonucleoside 5'-phosphate + diphosphate + H(+). In terms of biological role, nucleoside triphosphate pyrophosphatase. May have a dual role in cell division arrest and in preventing the incorporation of modified nucleotides into cellular nucleic acids. This chain is Nucleoside triphosphate pyrophosphatase, found in Mycolicibacterium vanbaalenii (strain DSM 7251 / JCM 13017 / BCRC 16820 / KCTC 9966 / NRRL B-24157 / PYR-1) (Mycobacterium vanbaalenii).